We begin with the raw amino-acid sequence, 123 residues long: Holo-[acyl-carrier-protein] synthase (123 aa).

Mg(2+) is bound by residues aspartate 8 and glutamate 56.

It belongs to the P-Pant transferase superfamily. AcpS family. The cofactor is Mg(2+).

The protein resides in the cytoplasm. It carries out the reaction apo-[ACP] + CoA = holo-[ACP] + adenosine 3',5'-bisphosphate + H(+). Its function is as follows. Transfers the 4'-phosphopantetheine moiety from coenzyme A to a Ser of acyl-carrier-protein. In Clostridium beijerinckii (strain ATCC 51743 / NCIMB 8052) (Clostridium acetobutylicum), this protein is Holo-[acyl-carrier-protein] synthase.